Here is a 385-residue protein sequence, read N- to C-terminus: Polyketide synthase 4 (385 aa).

C157 is an active-site residue.

Belongs to the thiolase-like superfamily. Chalcone/stilbene synthases family. Expressed in glandular trichomes.

Its subcellular location is the cytoplasm. In terms of biological role, polyketide synthase responsible for the biosynthesis of secondary metabolites. The chain is Polyketide synthase 4 (PKSG4) from Cannabis sativa (Hemp).